The following is a 274-amino-acid chain: Large ribosomal subunit protein uL2cz/uL2cy (274 aa).

The interval 224–274 (NPVDHPHGGGEGRAPIGRKKPATPWGYPALGRRSRKRNKYSDNLILRRRSK) is disordered.

It belongs to the universal ribosomal protein uL2 family. Part of the 50S ribosomal subunit.

Its subcellular location is the plastid. It is found in the chloroplast. In Carica papaya (Papaya), this protein is Large ribosomal subunit protein uL2cz/uL2cy (rpl2-A).